Reading from the N-terminus, the 560-residue chain is Eukaryotic translation initiation factor 3 subunit D-1 (560 aa).

The disordered stretch occupies residues 98–166; the sequence is VQKPPHQRGR…RGPPPKMRES (69 aa). The segment covering 100–121 has biased composition (basic residues); that stretch reads KPPHQRGRFRNMRNSRSGRGRN. The residue at position 128 (T128) is a Phosphothreonine. Over residues 147-156 the composition is skewed to basic residues; it reads GRGMGKKFGH. Residues 291–305 form an RNA gate region; sequence EFDLLTVNESSVEPP.

The protein belongs to the eIF-3 subunit D family. In terms of assembly, component of the eukaryotic translation initiation factor 3 (eIF-3) complex. The eIF-3 complex interacts with pix.

The protein localises to the cytoplasm. Functionally, mRNA cap-binding component of the eukaryotic translation initiation factor 3 (eIF-3) complex, which is involved in protein synthesis of a specialized repertoire of mRNAs and, together with other initiation factors, stimulates binding of mRNA and methionyl-tRNAi to the 40S ribosome. The eIF-3 complex specifically targets and initiates translation of a subset of mRNAs involved in cell proliferation. In the eIF-3 complex, eif3d specifically recognizes and binds the 7-methylguanosine cap of a subset of mRNAs. This Drosophila sechellia (Fruit fly) protein is Eukaryotic translation initiation factor 3 subunit D-1.